The sequence spans 179 residues: GTP-dependent dephospho-CoA kinase (179 aa).

5 residues coordinate GTP: D55, V57, D74, K76, and E128.

The protein belongs to the GTP-dependent DPCK family.

It carries out the reaction 3'-dephospho-CoA + GTP = GDP + CoA + H(+). Its pathway is cofactor biosynthesis; coenzyme A biosynthesis. Functionally, catalyzes the GTP-dependent phosphorylation of the 3'-hydroxyl group of dephosphocoenzyme A to form coenzyme A (CoA). The chain is GTP-dependent dephospho-CoA kinase from Saccharolobus solfataricus (strain ATCC 35092 / DSM 1617 / JCM 11322 / P2) (Sulfolobus solfataricus).